The sequence spans 482 residues: tRNA sulfurtransferase (482 aa).

The THUMP domain maps to Leu-61–Arg-165. ATP contacts are provided by residues Leu-183 to Ile-184, Lys-265, Gly-287, and Gln-296. Residues Cys-344 and Cys-456 are joined by a disulfide bond. The 79-residue stretch at Phe-404 to Pro-482 folds into the Rhodanese domain. The active-site Cysteine persulfide intermediate is the Cys-456.

The protein belongs to the ThiI family.

It is found in the cytoplasm. The catalysed reaction is [ThiI sulfur-carrier protein]-S-sulfanyl-L-cysteine + a uridine in tRNA + 2 reduced [2Fe-2S]-[ferredoxin] + ATP + H(+) = [ThiI sulfur-carrier protein]-L-cysteine + a 4-thiouridine in tRNA + 2 oxidized [2Fe-2S]-[ferredoxin] + AMP + diphosphate. It catalyses the reaction [ThiS sulfur-carrier protein]-C-terminal Gly-Gly-AMP + S-sulfanyl-L-cysteinyl-[cysteine desulfurase] + AH2 = [ThiS sulfur-carrier protein]-C-terminal-Gly-aminoethanethioate + L-cysteinyl-[cysteine desulfurase] + A + AMP + 2 H(+). It participates in cofactor biosynthesis; thiamine diphosphate biosynthesis. In terms of biological role, catalyzes the ATP-dependent transfer of a sulfur to tRNA to produce 4-thiouridine in position 8 of tRNAs, which functions as a near-UV photosensor. Also catalyzes the transfer of sulfur to the sulfur carrier protein ThiS, forming ThiS-thiocarboxylate. This is a step in the synthesis of thiazole, in the thiamine biosynthesis pathway. The sulfur is donated as persulfide by IscS. In Escherichia coli O9:H4 (strain HS), this protein is tRNA sulfurtransferase.